The sequence spans 1130 residues: Tyrosine-protein kinase ABL1 (1130 aa).

The tract at residues 1-60 (MLEICLKLVGCKSKKGLSSSSSCYLEEALQRPVASDFEPQGLSEAARWNSKENLLAGPSE) is CAP. L2 carries the N-myristoyl glycine lipid modification. S50 is modified (phosphoserine). The SH3 domain maps to 61–121 (NDPNLFVALY…PSNYITPVNS (61 aa)). A Phosphotyrosine; by autocatalysis modification is found at Y70. Y115, Y128, Y139, Y172, Y185, and Y215 each carry phosphotyrosine. In terms of domain architecture, SH2 spans 127 to 217 (WYHGPVSRNA…GLITTLHYPA (91 aa)). At Y226 the chain carries Phosphotyrosine; by autocatalysis. At S229 the chain carries Phosphoserine. Residues 242–493 (ITMKHKLGGG…PSFAEIHQAF (252 aa)) form the Protein kinase domain. 248–256 (LGGGQYGEV) is an ATP binding site. Phosphotyrosine occurs at positions 253 and 257. Residues K271 and 316-322 (EFMTYGN) each bind ATP. D363 acts as the Proton acceptor in catalysis. The Kinase activation loop motif lies at 381–405 (DFGLSRLMTGDTYTAHAGAKFPIKW). Y393 carries the phosphotyrosine; by autocatalysis and SRC-type Tyr-kinases modification. Y413 is subject to Phosphotyrosine. S446, S559, and S569 each carry phosphoserine. The interval 518–996 (AVSTLLQAPE…SASSALAGDQ (479 aa)) is disordered. Residues 537-566 (RAAEHRDTTDVPEMPHSKGQGESDPLDHEP) show a composition bias toward basic and acidic residues. The span at 586–597 (EDERLLPKDKKT) shows a compositional bias: basic and acidic residues. Residues 605–609 (KKKKK) carry the Nuclear localization signal 1 motif. Phosphoserine; by PAK2 is present on residues S618 and S619. 3 positions are modified to phosphoserine: S620, S659, and S683. A compositionally biased stretch (basic and acidic residues) spans 620 to 640 (SFREMDGQPERRGAGEEEGRD). A compositionally biased stretch (polar residues) spans 689–698 (KSSTLTSSRL). Residues 709 to 715 (SSKRFLR) carry the Nuclear localization signal 2 motif. K711 is subject to N6-acetyllysine; by EP300. S718 is subject to Phosphoserine. A phosphothreonine mark is found at T735 and T751. Residues 740–752 (LQSTGRQFDSSTF) show a composition bias toward polar residues. Basic and acidic residues predominate over residues 755–774 (HKSEKPALPRKRAGENRSDQ). The Nuclear localization signal 3 signature appears at 762–769 (LPRKRAGE). T781 carries the phosphothreonine modification. Over residues 788–802 (KKNEEAADEVFKDIM) the composition is skewed to basic and acidic residues. Phosphothreonine occurs at positions 814, 823, 844, and 852. At S855 the chain carries Phosphoserine. The segment at 869 to 968 (PAEESRVRRH…VLPATPKPQS (100 aa)) is DNA-binding. A compositionally biased stretch (basic and acidic residues) spans 881 to 891 (SSESPGRDKGK). Positions 905 to 915 (ASAGKAGGKPS) are enriched in low complexity. A Phosphoserine modification is found at S917. The interval 953 to 1130 (EGLKKPVLPA…VKEISDIVQR (178 aa)) is F-actin-binding. Positions 965–975 (KPQSAKPSGTP) are enriched in polar residues. The residue at position 977 (S977) is a Phosphoserine. The segment covering 984 to 993 (TLPSASSALA) has biased composition (low complexity). Residues 1090–1100 (LENNLRELQIC) carry the Nuclear export signal motif.

Belongs to the protein kinase superfamily. Tyr protein kinase family. ABL subfamily. In terms of assembly, interacts with SORBS1 following insulin stimulation. Found in a trimolecular complex containing CDK5 and CABLES1. Interacts with CABLES1 and PSTPIP1. Interacts with ZDHHC16, ITGB1 and HCK. Interacts with STX17; probably phosphorylates STX17. Interacts with INPPL1/SHIP2. Interacts with the 14-3-3 proteins, YWHAB, YWHAE, YWHAG, YWHAH, SFN and YWHAZ; the interaction with 14-3-3 proteins requires phosphorylation on Thr-735 and, sequesters ABL1 into the cytoplasm. Interacts with ABI1, ABI2, BCR, CRK, FGR, FYN, HCK, LYN, PSMA7 RAD9A, RAD51, RAD52, TP73 and WASF3. A complex made of ABL1, CTTN and MYLK regulates cortical actin-based cytoskeletal rearrangement critical to sphingosine 1-phosphate (S1P)-mediated endothelial cell (EC) barrier enhancement. Interacts (via SH3 domain) with CASP9; the interaction is direct and increases in the response of cells to genotoxic stress and ABL1/c-Abl activation. Found in a complex with ABL1, ABL2, CRK and UNC119; leading to the inhibition of CRK phosphorylation by ABL kinases. Interacts with TBX21. Interacts with NEDD9/HEF1; interaction is induced by CXCL12 promotion of ABL-mediated phosphorylation of NEDD9/HEF1. The cofactor is Mg(2+). Acetylated at Lys-711 by EP300 which promotes the cytoplasmic translocation. In terms of processing, phosphorylation at Tyr-70 by members of the SRC family of kinases disrupts SH3 domain-based autoinhibitory interactions and intermolecular associations, such as that with ABI1, and also enhances kinase activity. Phosphorylation at Tyr-226 and Tyr-393 correlate with increased activity. DNA damage-induced activation of ABL1 requires the function of ATM and Ser-446 phosphorylation. Phosphorylation at Ser-569 has been attributed to a CDC2-associated kinase and is coupled to cell division. Phosphorylation at Ser-618 and Ser-619 by PAK2 increases binding to CRK and reduces binding to ABI1. Phosphorylation on Thr-735 is required for binding 14-3-3 proteins for cytoplasmic translocation. Phosphorylated by PRKDC. Post-translationally, polyubiquitinated. Polyubiquitination of ABL1 leads to degradation. In terms of tissue distribution, widely expressed.

It localises to the cytoplasm. Its subcellular location is the cytoskeleton. The protein localises to the nucleus. The protein resides in the mitochondrion. It is found in the nucleus membrane. It carries out the reaction L-tyrosyl-[protein] + ATP = O-phospho-L-tyrosyl-[protein] + ADP + H(+). Its activity is regulated as follows. Stabilized in the inactive form by an association between the SH3 domain and the SH2-TK linker region, interactions of the N-terminal cap, and contributions from an N-terminal myristoyl group and phospholipids. Activated by autophosphorylation as well as by SRC-family kinase-mediated phosphorylation. Activated by RIN1 binding to the SH2 and SH3 domains. Also stimulated by cell death inducers and DNA-damage. Phosphatidylinositol 4,5-bisphosphate (PIP2), a highly abundant phosphoinositide known to regulate cytoskeletal and membrane proteins, also inhibits the tyrosine kinase activity. Activated by 5-(1,3-diaryl-1H-pyrazol-4-yl)hydantoin, 5-[3-(4-fluorophenyl)-1-phenyl-1H-pyrazol-4-yl]-2,4-imidazolidinedione (DPH). Inhibited by ABI1, whose activity is controlled by ABL1 itself through tyrosine phosphorylation. Also inhibited by imatinib mesylate (Gleevec) which is used for the treatment of chronic myeloid leukemia (CML), and by VX-680, an inhibitor that also acts on imatinib-resistant mutants. Functionally, non-receptor tyrosine-protein kinase that plays a role in many key processes linked to cell growth and survival such as cytoskeleton remodeling in response to extracellular stimuli, cell motility and adhesion, receptor endocytosis, autophagy, DNA damage response and apoptosis. Coordinates actin remodeling through tyrosine phosphorylation of proteins controlling cytoskeleton dynamics like WASF3 (involved in branch formation); ANXA1 (involved in membrane anchoring); DBN1, DBNL, CTTN, RAPH1 and ENAH (involved in signaling); or MAPT and PXN (microtubule-binding proteins). Phosphorylation of WASF3 is critical for the stimulation of lamellipodia formation and cell migration. Involved in the regulation of cell adhesion and motility through phosphorylation of key regulators of these processes such as BCAR1, CRK, CRKL, DOK1, EFS or NEDD9. Phosphorylates multiple receptor tyrosine kinases and more particularly promotes endocytosis of EGFR, facilitates the formation of neuromuscular synapses through MUSK, inhibits PDGFRB-mediated chemotaxis and modulates the endocytosis of activated B-cell receptor complexes. Other substrates which are involved in endocytosis regulation are the caveolin (CAV1) and RIN1. Moreover, ABL1 regulates the CBL family of ubiquitin ligases that drive receptor down-regulation and actin remodeling. Phosphorylation of CBL leads to increased EGFR stability. Involved in late-stage autophagy by regulating positively the trafficking and function of lysosomal components. ABL1 targets to mitochondria in response to oxidative stress and thereby mediates mitochondrial dysfunction and cell death. In response to oxidative stress, phosphorylates serine/threonine kinase PRKD2 at 'Tyr-717'. ABL1 is also translocated in the nucleus where it has DNA-binding activity and is involved in DNA-damage response and apoptosis. Many substrates are known mediators of DNA repair: DDB1, DDB2, ERCC3, ERCC6, RAD9A, RAD51, RAD52 or WRN. Activates the proapoptotic pathway when the DNA damage is too severe to be repaired. Phosphorylates TP73, a primary regulator for this type of damage-induced apoptosis. Phosphorylates the caspase CASP9 on 'Tyr-153' and regulates its processing in the apoptotic response to DNA damage. Phosphorylates PSMA7 that leads to an inhibition of proteasomal activity and cell cycle transition blocks. ABL1 also acts as a regulator of multiple pathological signaling cascades during infection. Several known tyrosine-phosphorylated microbial proteins have been identified as ABL1 substrates. This is the case of A36R of Vaccinia virus, Tir (translocated intimin receptor) of pathogenic E.coli and possibly Citrobacter, CagA (cytotoxin-associated gene A) of H.pylori, or AnkA (ankyrin repeat-containing protein A) of A.phagocytophilum. Pathogens can highjack ABL1 kinase signaling to reorganize the host actin cytoskeleton for multiple purposes, like facilitating intracellular movement and host cell exit. Finally, functions as its own regulator through autocatalytic activity as well as through phosphorylation of its inhibitor, ABI1. Regulates T-cell differentiation in a TBX21-dependent manner. Positively regulates chemokine-mediated T-cell migration, polarization, and homing to lymph nodes and immune-challenged tissues, potentially via activation of NEDD9/HEF1 and RAP1. Phosphorylates TBX21 on tyrosine residues leading to an enhancement of its transcriptional activator activity. The sequence is that of Tyrosine-protein kinase ABL1 (ABL1) from Homo sapiens (Human).